Here is a 1143-residue protein sequence, read N- to C-terminus: DNA polymerase II large subunit (1143 aa).

It belongs to the archaeal DNA polymerase II family. Heterodimer of a large subunit and a small subunit.

It carries out the reaction DNA(n) + a 2'-deoxyribonucleoside 5'-triphosphate = DNA(n+1) + diphosphate. It catalyses the reaction Exonucleolytic cleavage in the 3'- to 5'-direction to yield nucleoside 5'-phosphates.. Possesses two activities: a DNA synthesis (polymerase) and an exonucleolytic activity that degrades single-stranded DNA in the 3'- to 5'-direction. Has a template-primer preference which is characteristic of a replicative DNA polymerase. The sequence is that of DNA polymerase II large subunit (polC) from Archaeoglobus fulgidus (strain ATCC 49558 / DSM 4304 / JCM 9628 / NBRC 100126 / VC-16).